The following is a 424-amino-acid chain: CinA-like protein (424 aa).

The protein belongs to the CinA family.

The polypeptide is CinA-like protein (Shewanella baltica (strain OS155 / ATCC BAA-1091)).